A 497-amino-acid polypeptide reads, in one-letter code: Probable 26S proteasome regulatory subunit rpn3 (497 aa).

Residues 1–27 (MIDDQRDMQVDSVNQEENVDSGETKQN) form a disordered region. The region spanning 248–428 (IRYQYYLGRI…AFMASNEAMD (181 aa)) is the PCI domain. Over residues 470–483 (GVEEARRRMDKEMA) the composition is skewed to basic and acidic residues. The disordered stretch occupies residues 470–497 (GVEEARRRMDKEMAEADLDDDEPDLGEF). Acidic residues predominate over residues 484–497 (EADLDDDEPDLGEF).

It belongs to the proteasome subunit S3 family. In terms of assembly, the 26S proteasome is composed of a core protease, known as the 20S proteasome, capped at one or both ends by the 19S regulatory complex (RC). The RC is composed of at least 18 different subunits in two subcomplexes, the base and the lid, which form the portions proximal and distal to the 20S proteolytic core, respectively.

In terms of biological role, acts as a regulatory subunit of the 26 proteasome which is involved in the ATP-dependent degradation of ubiquitinated proteins. The sequence is that of Probable 26S proteasome regulatory subunit rpn3 (rpn3) from Schizosaccharomyces pombe (strain 972 / ATCC 24843) (Fission yeast).